Consider the following 264-residue polypeptide: Hydroxyethylthiazole kinase (264 aa).

Substrate is bound at residue methionine 52. The ATP site is built by arginine 127 and threonine 173. Glycine 200 contributes to the substrate binding site.

Belongs to the Thz kinase family. Requires Mg(2+) as cofactor.

It carries out the reaction 5-(2-hydroxyethyl)-4-methylthiazole + ATP = 4-methyl-5-(2-phosphooxyethyl)-thiazole + ADP + H(+). It participates in cofactor biosynthesis; thiamine diphosphate biosynthesis; 4-methyl-5-(2-phosphoethyl)-thiazole from 5-(2-hydroxyethyl)-4-methylthiazole: step 1/1. In terms of biological role, catalyzes the phosphorylation of the hydroxyl group of 4-methyl-5-beta-hydroxyethylthiazole (THZ). The sequence is that of Hydroxyethylthiazole kinase from Pectobacterium carotovorum subsp. carotovorum (strain PC1).